A 129-amino-acid chain; its full sequence is Protein RALF-like 34 (129 aa).

The N-terminal stretch at 1–23 (MAASSLNLLLILSLLTFISLQRS) is a signal peptide. A propeptide spans 24–76 (ESLSDNPSLTLLPDGFDWPISHSDEFDIIDGEESFEVTEEDDGVTDRRSLYWR) (removed in mature form). 2 disulfide bridges follow: Cys94–Cys107 and Cys121–Cys127.

The protein belongs to the plant rapid alkalinization factor (RALF) family. In terms of processing, proteolytically cleaved, probably by S1P, a subtilisin-like serine protease (subtilase). As to expression, expressed in roots, stems and leaves.

It is found in the secreted. In terms of biological role, cell signaling peptide that may regulate plant stress, growth, and development. Mediates a rapid alkalinization of extracellular space by mediating a transient increase in the cytoplasmic Ca(2+) concentration leading to a calcium-dependent signaling events through a cell surface receptor and a concomitant activation of some intracellular mitogen-activated protein kinases. This Arabidopsis thaliana (Mouse-ear cress) protein is Protein RALF-like 34 (RALFL34).